The primary structure comprises 279 residues: Putative pyruvate, phosphate dikinase regulatory protein (279 aa).

ADP is bound at residue 157-164 (GVSRTSKT).

The protein belongs to the pyruvate, phosphate/water dikinase regulatory protein family. PDRP subfamily.

It catalyses the reaction N(tele)-phospho-L-histidyl/L-threonyl-[pyruvate, phosphate dikinase] + ADP = N(tele)-phospho-L-histidyl/O-phospho-L-threonyl-[pyruvate, phosphate dikinase] + AMP + H(+). The catalysed reaction is N(tele)-phospho-L-histidyl/O-phospho-L-threonyl-[pyruvate, phosphate dikinase] + phosphate + H(+) = N(tele)-phospho-L-histidyl/L-threonyl-[pyruvate, phosphate dikinase] + diphosphate. Functionally, bifunctional serine/threonine kinase and phosphorylase involved in the regulation of the pyruvate, phosphate dikinase (PPDK) by catalyzing its phosphorylation/dephosphorylation. The protein is Putative pyruvate, phosphate dikinase regulatory protein of Lactobacillus helveticus (strain DPC 4571).